We begin with the raw amino-acid sequence, 358 residues long: Gibberellin receptor GID1B (358 aa).

A2 bears the N-acetylalanine mark. Positions 113 to 115 (HGG) match the Involved in the stabilization of the negatively charged intermediate by the formation of the oxyanion hole motif. Gibberellin A4 is bound by residues 115 to 116 (GS), Y127, and S191. Residues S116, Y127, S191, and F238 each contribute to the gibberellin A3 site. The active site involves S191. D289 is a catalytic residue. G320 serves as a coordination point for gibberellin A4. G320 serves as a coordination point for gibberellin A3.

This sequence belongs to the 'GDXG' lipolytic enzyme family. In terms of assembly, interacts with the DELLA proteins GAI, RGA, RGL1, RGL2 and RGL3 in a GA-dependent manner. As to expression, widely expressed.

The protein localises to the nucleus. Its function is as follows. Functions as a soluble gibberellin (GA) receptor. GA is an essential hormone that regulates growth and development in plants. Binds with high affinity the biologically active gibberellin GA4, but has no affinity for the biologically inactive GAs. In response to GA, interacts with specific DELLA proteins, known as repressors of GA-induced growth, and targets them for degradation via proteasome. Seems to be required for GA signaling that controls root growth, seed germination and flower development. May function as a dominant GA receptor at low GA concentrations in germination. Partially redundant with GID1A and GID1C. This Arabidopsis thaliana (Mouse-ear cress) protein is Gibberellin receptor GID1B (GID1B).